Consider the following 238-residue polypeptide: Dolichyldiphosphatase 1 (238 aa).

4 helical membrane passes run 33–53 (LAYL…LIIF), 100–120 (PSSH…FLYL), 130–150 (FLDL…AFLV), and 162–182 (WSQV…WFII).

The protein belongs to the dolichyldiphosphatase family. As to expression, widely expressed with highest levels in brain, kidney, lung and intestine.

It localises to the endoplasmic reticulum membrane. The enzyme catalyses a di-trans,poly-cis-dolichyl diphosphate + H2O = a di-trans,poly-cis-dolichyl phosphate + phosphate + H(+). The protein operates within protein modification; protein glycosylation. Functionally, required for efficient N-glycosylation. Necessary for maintaining optimal levels of dolichol-linked oligosaccharides. Hydrolyzes dolichyl pyrophosphate at a very high rate and dolichyl monophosphate at a much lower rate. Does not act on phosphatidate. The protein is Dolichyldiphosphatase 1 (Dolpp1) of Mus musculus (Mouse).